A 79-amino-acid polypeptide reads, in one-letter code: Serine rich endogenous peptide 2 (79 aa).

A signal peptide spans 1–19 (MANNLGLVILLLVIVLVSC). Residues 25–79 (CALASPQKSRPSSEWRRKLIPVRSSRSPRSPSFAPKKPPPPPPSPPLSPSSPPSN) are disordered. The SCOOP motif motif lies at 45 to 57 (PVRSSRSPRSPSF). Residues 45 to 59 (PVRSSRSPRSPSFAP) show a composition bias toward low complexity. The SxS motif essential for MIK2 binding motif lies at 49 to 51 (SRS). The segment covering 60–79 (KKPPPPPPSPPLSPSSPPSN) has biased composition (pro residues).

The protein belongs to the serine rich endogenous peptide (SCOOP) phytocytokine family. Interacts with MIK2 (via extracellular leucine-rich repeat domain); this interaction triggers the formation of complex between MIK2 and the BAK1/SERK3 and SERK4 coreceptors, and subsequent BAK1 activation by phosphorylation.

It localises to the cell membrane. It is found in the secreted. Its subcellular location is the extracellular space. The protein localises to the apoplast. Its function is as follows. Brassicaceae-specific phytocytokine (plant endogenous peptide released into the apoplast) perceived by MIK2 in a BAK1/SERK3 and SERK4 coreceptors-dependent manner, that modulates various physiological and antimicrobial processes including growth prevention and reactive oxygen species (ROS) response regulation. The polypeptide is Serine rich endogenous peptide 2 (Arabidopsis thaliana (Mouse-ear cress)).